The chain runs to 66 residues: Large ribosomal subunit protein bL35 (66 aa).

This sequence belongs to the bacterial ribosomal protein bL35 family.

This Ruegeria pomeroyi (strain ATCC 700808 / DSM 15171 / DSS-3) (Silicibacter pomeroyi) protein is Large ribosomal subunit protein bL35.